We begin with the raw amino-acid sequence, 435 residues long: Endosome-associated-trafficking regulator 1 (435 aa).

2 positions are modified to phosphoserine: S18 and S147. 2 disordered regions span residues 136 to 185 (ASRH…TGWS) and 225 to 251 (ESLP…PSAD). Acidic residues predominate over residues 173–182 (LLDEEEDEDT). Residues 173 to 198 (LLDEEEDEDTGWSGAYLPSAIEQTHP) are required for interaction with PTPN13. The span at 240–250 (SPASPAGSPSA) shows a compositional bias: low complexity. 2 positions are modified to phosphoserine: S243 and S247. A coiled-coil region spans residues 261 to 371 (DRHLRTLQIS…FQRENEALRC (111 aa)).

The protein belongs to the ENTR1 family. Found in a complex with ENTR1, PTPN13 and GIT1. Interacts with PTPN13 (via the FERM domain). Interacts (via N-terminus) with GIT1 (via N- and C-terminus); this interaction is direct. Interacts with NOD2. Interacts (via N-terminus) with IFT88. Interacts with VPS35. Post-translationally, phosphorylated. Expressed in the colon (at protein level).

The protein resides in the cytoplasm. The protein localises to the early endosome. It localises to the endosome. It is found in the recycling endosome. Its subcellular location is the midbody. The protein resides in the cytoskeleton. The protein localises to the microtubule organizing center. It localises to the centrosome. It is found in the cilium basal body. Endosome-associated protein that plays a role in membrane receptor sorting, cytokinesis and ciliogenesis. Involved in the endosome-to-plasma membrane trafficking and recycling of SNX27-retromer-dependent cargo proteins, such as GLUT1. Involved in the regulation of cytokinesis; the function may involve PTPN13 and GIT1. Plays a role in the formation of cilia. Involved in cargo protein localization, such as PKD2, at primary cilia. Involved in the presentation of the tumor necrosis factor (TNF) receptor TNFRSF1A on the cell surface, and hence in the modulation of the TNF-induced apoptosis. The polypeptide is Endosome-associated-trafficking regulator 1 (Homo sapiens (Human)).